The following is a 102-amino-acid chain: Large ribosomal subunit protein bL21 (102 aa).

The protein belongs to the bacterial ribosomal protein bL21 family. In terms of assembly, part of the 50S ribosomal subunit. Contacts protein L20.

Functionally, this protein binds to 23S rRNA in the presence of protein L20. The protein is Large ribosomal subunit protein bL21 of Bifidobacterium animalis subsp. lactis (strain AD011).